Reading from the N-terminus, the 307-residue chain is Ribosomal RNA small subunit methyltransferase H (307 aa).

S-adenosyl-L-methionine contacts are provided by residues 32–34 (GGH), D52, F78, D99, and Q106.

Belongs to the methyltransferase superfamily. RsmH family.

It localises to the cytoplasm. The enzyme catalyses cytidine(1402) in 16S rRNA + S-adenosyl-L-methionine = N(4)-methylcytidine(1402) in 16S rRNA + S-adenosyl-L-homocysteine + H(+). In terms of biological role, specifically methylates the N4 position of cytidine in position 1402 (C1402) of 16S rRNA. This Acinetobacter baumannii (strain AB307-0294) protein is Ribosomal RNA small subunit methyltransferase H.